The chain runs to 81 residues: Conotoxin Vc6.7 (81 aa).

The first 19 residues, 1-19 (MEKLTILLLVAAVLMSIQA), serve as a signal peptide directing secretion. A propeptide spanning residues 20–44 (VNQEKHQRAKMNLLSKRKPPAERWW) is cleaved from the precursor. 3 disulfides stabilise this stretch: Cys-49-Cys-63, Cys-56-Cys-67, and Cys-62-Cys-72.

The protein belongs to the conotoxin O2 superfamily. Expressed by the venom duct.

It is found in the secreted. In terms of biological role, inhibits voltage-gated ion channels. This is Conotoxin Vc6.7 from Conus victoriae (Queen Victoria cone).